A 419-amino-acid polypeptide reads, in one-letter code: Elongation factor Tu, chloroplastic (419 aa).

In terms of domain architecture, tr-type G spans 10 to 214 (KPHVNIGTIG…AVDSYIPTPK (205 aa)). Residues 19–26 (GHVDHGKT) form a G1 region. Residue 19 to 26 (GHVDHGKT) participates in GTP binding. T26 lines the Mg(2+) pocket. The G2 stretch occupies residues 60–64 (GITIN). Positions 81 to 84 (DCPG) are G3. Residues 81–85 (DCPGH) and 136–139 (NKED) contribute to the GTP site. The interval 136-139 (NKED) is G4. The G5 stretch occupies residues 174 to 176 (SAL).

It belongs to the TRAFAC class translation factor GTPase superfamily. Classic translation factor GTPase family. EF-Tu/EF-1A subfamily.

It is found in the plastid. The protein resides in the chloroplast. It catalyses the reaction GTP + H2O = GDP + phosphate + H(+). In terms of biological role, GTP hydrolase that promotes the GTP-dependent binding of aminoacyl-tRNA to the A-site of ribosomes during protein biosynthesis. In Chara vulgaris (Common stonewort), this protein is Elongation factor Tu, chloroplastic (tufA).